The chain runs to 279 residues: MRKIKIITDSTAGLTLEEAAKWNIEVLYLTVEIDGKVYNPKTDITPEEFMVRMAETKELPKSSQPAIGSFVEAYEKYTAEGYEILSIHLTEKLSGTVNAARQAADMVEGNITVVDCDYTARGQAFQVLKAAEMAQAGDYSVEEIHAAINDIRDKTKLYIVVVTLDNLIKGGRVGRMQGFLGSLLNIKLIAKLTDGQLEEETKVRSNKKVLQYCLNLIKDEPKKIQQLDVVHANGLNLADDFIAESKEITGLTEIPLFFADPVISTHAGTGAFAFMYYTD.

Residues 4-278 form the DegV domain; sequence IKIITDSTAG…TGAFAFMYYT (275 aa). 2 residues coordinate hexadecanoate: Ser62 and Ser94.

Functionally, may bind long-chain fatty acids, such as palmitate, and may play a role in lipid transport or fatty acid metabolism. This is DegV domain-containing protein lin1977 from Listeria innocua serovar 6a (strain ATCC BAA-680 / CLIP 11262).